A 105-amino-acid polypeptide reads, in one-letter code: Class II hydrophobin 1 (105 aa).

The signal sequence occupies residues 1–15; it reads MQVLLIATLVASVLA. 4 disulfides stabilise this stretch: C38–C87, C48–C78, C49–C58, and C88–C99.

It belongs to the cerato-ulmin hydrophobin family. Homotetramer. Further self-assembles to form highly ordered films at water-air interfaces through intermolecular interactions.

It is found in the secreted. The protein resides in the cell wall. Its function is as follows. Aerial growth, conidiation, and dispersal of filamentous fungi in the environment rely upon a capability of their secreting small amphipathic proteins called hydrophobins (HPBs) with low sequence identity. Class I can self-assemble into an outermost layer of rodlet bundles on aerial cell surfaces, conferring cellular hydrophobicity that supports fungal growth, development and dispersal; whereas Class II form highly ordered films at water-air interfaces through intermolecular interactions but contribute nothing to the rodlet structure. HYD1 is a class II hydrophobin that plays roles in conidiation and cuticle-bypassing infection by regulating the transcripts of frequency clock protein frq, and velvet protein vosA, as well as primordium formation via the mitogen-activated protein kinase signaling pathway. Also participates in stress response, including tolerance of mycelia to osmotic and oxidative stresses, and conidia to high or low temperature. Acts as a defensive factor against Calcarisporium cordycipiticola infection, probably via the formation of a physical barrier to inhibit the pathogen infection owing to its hydrophobicity or binding to the effector of C.cordycipiticola, hindering the recognition of the pathogen. Finally, regulates the transcription of the AreA transcription factor at different developmental stages via a positive feedback loop. The polypeptide is Class II hydrophobin 1 (Cordyceps militaris (Caterpillar fungus)).